The following is an 88-amino-acid chain: Apolipoprotein C-I (88 aa).

The first 26 residues, 1-26 (MRLFLSLPVLVVVLAMVLEGPAPTQA), serve as a signal peptide directing secretion.

This sequence belongs to the apolipoprotein C1 family.

Its subcellular location is the secreted. Functionally, inhibitor of lipoprotein binding to the low density lipoprotein (LDL) receptor, LDL receptor-related protein, and very low density lipoprotein (VLDL) receptor. Associates with high density lipoproteins (HDL) and the triacylglycerol-rich lipoproteins in the plasma and makes up about 10% of the protein of the VLDL and 2% of that of HDL. Appears to interfere directly with fatty acid uptake and is also the major plasma inhibitor of cholesteryl ester transfer protein (CETP). Binds free fatty acids and reduces their intracellular esterification. Modulates the interaction of APOE with beta-migrating VLDL and inhibits binding of beta-VLDL to the LDL receptor-related protein. This Mirounga angustirostris (Northern elephant seal) protein is Apolipoprotein C-I (APOC1).